The sequence spans 166 residues: Large ribosomal subunit protein uL11 (166 aa).

The protein belongs to the universal ribosomal protein uL11 family.

In terms of biological role, this protein binds directly to 26S ribosomal RNA. This is Large ribosomal subunit protein uL11 (RPL12) from Prunus armeniaca (Apricot).